Consider the following 403-residue polypeptide: S-adenosylmethionine synthase (403 aa).

H14 is a binding site for ATP. D16 contacts Mg(2+). E42 lines the K(+) pocket. Residues E55 and Q99 each coordinate L-methionine. Positions 99 to 109 (QSPEIAEGVDH) are flexible loop. ATP contacts are provided by residues 180 to 182 (DAK), 250 to 251 (RF), D259, 265 to 266 (RK), A282, and K286. D259 contributes to the L-methionine binding site. An L-methionine-binding site is contributed by K290.

The protein belongs to the AdoMet synthase family. As to quaternary structure, homotetramer; dimer of dimers. Requires Mg(2+) as cofactor. K(+) is required as a cofactor.

It is found in the cytoplasm. It carries out the reaction L-methionine + ATP + H2O = S-adenosyl-L-methionine + phosphate + diphosphate. Its pathway is amino-acid biosynthesis; S-adenosyl-L-methionine biosynthesis; S-adenosyl-L-methionine from L-methionine: step 1/1. Catalyzes the formation of S-adenosylmethionine (AdoMet) from methionine and ATP. The overall synthetic reaction is composed of two sequential steps, AdoMet formation and the subsequent tripolyphosphate hydrolysis which occurs prior to release of AdoMet from the enzyme. The sequence is that of S-adenosylmethionine synthase from Deinococcus deserti (strain DSM 17065 / CIP 109153 / LMG 22923 / VCD115).